Reading from the N-terminus, the 350-residue chain is Glycerol-1-phosphate dehydrogenase [NAD(P)+] (350 aa).

NAD(+)-binding positions include 94-98 and 116-119; these read GKPID and TVAS. Asp121 is a substrate binding site. Ser125 is a binding site for NAD(+). Asp168 contacts substrate. The Zn(2+) site is built by Asp168 and His248. Position 252 (His252) interacts with substrate. His264 contacts Zn(2+).

This sequence belongs to the glycerol-1-phosphate dehydrogenase family. It depends on Zn(2+) as a cofactor.

It is found in the cytoplasm. It carries out the reaction sn-glycerol 1-phosphate + NAD(+) = dihydroxyacetone phosphate + NADH + H(+). It catalyses the reaction sn-glycerol 1-phosphate + NADP(+) = dihydroxyacetone phosphate + NADPH + H(+). It functions in the pathway membrane lipid metabolism; glycerophospholipid metabolism. Catalyzes the NAD(P)H-dependent reduction of dihydroxyacetonephosphate (DHAP or glycerone phosphate) to glycerol 1-phosphate (G1P). The G1P thus generated is used as the glycerophosphate backbone of phospholipids in the cellular membranes of Archaea. In Halorubrum lacusprofundi (strain ATCC 49239 / DSM 5036 / JCM 8891 / ACAM 34), this protein is Glycerol-1-phosphate dehydrogenase [NAD(P)+].